Reading from the N-terminus, the 810-residue chain is Phospholipase D alpha 1 (810 aa).

A propeptide spanning residues 1–36 (MAQHLLHGTLHATIYEVDDLHTGGLRSGFFGKILAN) is cleaved from the precursor. Positions 1 to 126 (MAQHLLHGTL…IHGEEVDQWV (126 aa)) constitute a C2 domain. Asp187 serves as a coordination point for Ca(2+). The 40-residue stretch at 327–366 (AMFTHHQKIVVVDSEMPSRGGSQMRRIVSFVGGIDLCDGR) folds into the PLD phosphodiesterase 1 domain. Active-site residues include His332, Lys334, and Asp339. His332 contacts a 1,2-diacyl-sn-glycero-3-phosphate. His372 and His406 together coordinate Ca(2+). A 1,2-diacyl-sn-glycero-3-phosphate is bound by residues Gln522 and His661. Positions 656 to 683 (FMIYVHTKMMIVDDEYIIIGSANINQRS) constitute a PLD phosphodiesterase 2 domain. Residues His661, Lys663, and Asp668 contribute to the active site. Glu722 contacts Ca(2+).

It belongs to the phospholipase D family. C2-PLD subfamily. Ca(2+) serves as cofactor.

The protein localises to the cytoplasm. It is found in the membrane. It catalyses the reaction a 1,2-diacyl-sn-glycero-3-phosphocholine + H2O = a 1,2-diacyl-sn-glycero-3-phosphate + choline + H(+). Hydrolyzes glycerol-phospholipids at the terminal phosphodiesteric bond. Plays an important role in various cellular processes, including phytohormone action, vesicular trafficking, secretion, cytoskeletal arrangement, meiosis, tumor promotion, pathogenesis, membrane deterioration and senescence. The polypeptide is Phospholipase D alpha 1 (PLD1) (Brassica oleracea var. capitata (Cabbage)).